The sequence spans 1404 residues: Clustered mitochondria protein homolog (1404 aa).

A Clu domain is found at 357 to 646 (HTHHADALRS…RLNPVDINWL (290 aa)). Acidic residues predominate over residues 528 to 540 (ADELPEADGETTE). Disordered regions lie at residues 528–561 (ADEL…SNKA), 706–735 (DAKA…ERLD), 996–1046 (GCHG…ARAT), and 1337–1372 (SERQ…GNGT). Basic and acidic residues predominate over residues 706-723 (DAKAKEAASKEDGEKTEA). Low complexity-rich tracts occupy residues 1021-1046 (NEQQ…ARAT) and 1358-1372 (AAIT…GNGT).

This sequence belongs to the CLU family. In terms of assembly, may associate with the eukaryotic translation initiation factor 3 (eIF-3) complex.

It is found in the cytoplasm. Its function is as follows. mRNA-binding protein involved in proper cytoplasmic distribution of mitochondria. The polypeptide is Clustered mitochondria protein homolog (Mycosarcoma maydis (Corn smut fungus)).